A 745-amino-acid chain; its full sequence is Copper-exporting P-type ATPase B (745 aa).

Residues 1-76 are disordered; that stretch reads MNNGIDPENE…GMDHSHMDHE (76 aa). Residues 1–108 lie on the Cytoplasmic side of the membrane; that stretch reads MNNGIDPENE…HMGNFKQKFW (108 aa). Positions 36–76 are enriched in basic and acidic residues; it reads LQEHGKMENMDQHHTHGHMERHQQMDHGHMSGMDHSHMDHE. 3 repeat units span residues 60–71, 73–84, and 86–97. Residues 60–97 form a 3 X 12 AA approximate repeats region; the sequence is MDHGHMSGMDHSHMDHEDMSGMNHSHMGHENMSGMDHS. Residues 109–128 form a helical membrane-spanning segment; the sequence is LSLILAIPIILFSPMMGMSF. The Extracellular portion of the chain corresponds to 129–139; it reads PFQVTFPGSNW. The helical transmembrane segment at 140–160 threads the bilayer; that stretch reads VVLVLATILFIYGGQPFLSGA. The Cytoplasmic segment spans residues 161 to 170; that stretch reads KMELKQKSPA. A helical transmembrane segment spans residues 171-191; sequence MMTLIAMGITVAYVYSVYSFI. Over 192–200 the chain is Extracellular; that stretch reads ANLINPHTH. Residues 201–217 traverse the membrane as a helical segment; sequence VMDFFWELATLIVIMLL. The Cytoplasmic segment spans residues 218-359; the sequence is GHWIEMNAVS…EFLSDKVAKW (142 aa). A helical transmembrane segment spans residues 360-379; the sequence is LFYVALVVGIIAFIAWLFLA. Residues 380–388 are Extracellular-facing; it reads NLPDALERM. The helical transmembrane segment at 389 to 409 threads the bilayer; sequence VTVFIIACPHALGLAIPLVVA. At 410–703 the chain is on the cytoplasmic side; it reads RSTSIAAKNG…QNLWWGAGYN (294 aa). Asp-440 functions as the 4-aspartylphosphate intermediate in the catalytic mechanism. Asp-638 and Asp-642 together coordinate Mg(2+). Residues 704–721 form a helical membrane-spanning segment; sequence IIAIPLAAGILAPIGLIL. The Extracellular segment spans residues 722–723; that stretch reads SP. The chain crosses the membrane as a helical span at residues 724–744; the sequence is AVGAVLMSLSTVVVALNALTL. Residue Lys-745 is a topological domain, cytoplasmic.

Belongs to the cation transport ATPase (P-type) (TC 3.A.3) family. Type IB subfamily. In terms of assembly, monomer.

It localises to the cell membrane. It catalyses the reaction Cu(+)(in) + ATP + H2O = Cu(+)(out) + ADP + phosphate + H(+). With respect to regulation, inhibited by vanadate. Functionally, involved in copper export. Can also export silver. The sequence is that of Copper-exporting P-type ATPase B (copB) from Enterococcus hirae (strain ATCC 9790 / DSM 20160 / JCM 8729 / LMG 6399 / NBRC 3181 / NCIMB 6459 / NCDO 1258 / NCTC 12367 / WDCM 00089 / R).